We begin with the raw amino-acid sequence, 167 residues long: UPF0336 protein MAP_4109 (167 aa).

Positions G21–K124 constitute a MaoC-like domain.

Belongs to the UPF0336 family.

The polypeptide is UPF0336 protein MAP_4109 (Mycolicibacterium paratuberculosis (strain ATCC BAA-968 / K-10) (Mycobacterium paratuberculosis)).